A 235-amino-acid polypeptide reads, in one-letter code: Sugar fermentation stimulation protein homolog (235 aa).

This sequence belongs to the SfsA family.

In Serratia proteamaculans (strain 568), this protein is Sugar fermentation stimulation protein homolog.